Here is a 169-residue protein sequence, read N- to C-terminus: NADH-quinone oxidoreductase subunit I (169 aa).

4Fe-4S ferredoxin-type domains lie at 61-90 (RRYD…IESE) and 100-129 (TRYD…ETHI). The [4Fe-4S] cluster site is built by Cys-70, Cys-73, Cys-76, Cys-80, Cys-109, Cys-112, Cys-115, and Cys-119.

The protein belongs to the complex I 23 kDa subunit family. In terms of assembly, NDH-1 is composed of 14 different subunits. Subunits NuoA, H, J, K, L, M, N constitute the membrane sector of the complex. It depends on [4Fe-4S] cluster as a cofactor.

It is found in the cell inner membrane. The enzyme catalyses a quinone + NADH + 5 H(+)(in) = a quinol + NAD(+) + 4 H(+)(out). In terms of biological role, NDH-1 shuttles electrons from NADH, via FMN and iron-sulfur (Fe-S) centers, to quinones in the respiratory chain. The immediate electron acceptor for the enzyme in this species is believed to be ubiquinone. Couples the redox reaction to proton translocation (for every two electrons transferred, four hydrogen ions are translocated across the cytoplasmic membrane), and thus conserves the redox energy in a proton gradient. The polypeptide is NADH-quinone oxidoreductase subunit I (Verminephrobacter eiseniae (strain EF01-2)).